The sequence spans 83 residues: Cytochrome b559 subunit alpha (83 aa).

The helical transmembrane segment at V21–W35 threads the bilayer. Residue H23 participates in heme binding.

It belongs to the PsbE/PsbF family. Heterodimer of an alpha subunit and a beta subunit. PSII is composed of 1 copy each of membrane proteins PsbA, PsbB, PsbC, PsbD, PsbE, PsbF, PsbH, PsbI, PsbJ, PsbK, PsbL, PsbM, PsbT, PsbX, PsbY, PsbZ, Psb30/Ycf12, at least 3 peripheral proteins of the oxygen-evolving complex and a large number of cofactors. It forms dimeric complexes. Heme b is required as a cofactor.

It is found in the plastid. The protein resides in the chloroplast thylakoid membrane. This b-type cytochrome is tightly associated with the reaction center of photosystem II (PSII). PSII is a light-driven water:plastoquinone oxidoreductase that uses light energy to abstract electrons from H(2)O, generating O(2) and a proton gradient subsequently used for ATP formation. It consists of a core antenna complex that captures photons, and an electron transfer chain that converts photonic excitation into a charge separation. The polypeptide is Cytochrome b559 subunit alpha (Chara vulgaris (Common stonewort)).